The sequence spans 151 residues: MRVWIDADACPKAAKDQVVRFALKRQFEVVLVAGQAQIKPAFACVRLIVVPSGPDAADDYLVEHAVPGELVICSDVPLADRLVKKGLAALDPRGKEFDAQNMGERLAVRNLFTDLREQGQVSGGQAPYGDREKQAFANALDRILTRLARQA.

Belongs to the UPF0178 family.

The protein is UPF0178 protein PFL_5989 of Pseudomonas fluorescens (strain ATCC BAA-477 / NRRL B-23932 / Pf-5).